Reading from the N-terminus, the 445-residue chain is UPF0210 protein SPJ_0248 (445 aa).

It belongs to the UPF0210 family. Homodimer.

The chain is UPF0210 protein SPJ_0248 from Streptococcus pneumoniae (strain JJA).